A 427-amino-acid polypeptide reads, in one-letter code: Glutamate-1-semialdehyde 2,1-aminomutase (427 aa).

At lysine 267 the chain carries N6-(pyridoxal phosphate)lysine.

This sequence belongs to the class-III pyridoxal-phosphate-dependent aminotransferase family. HemL subfamily. Homodimer. The cofactor is pyridoxal 5'-phosphate.

Its subcellular location is the cytoplasm. The catalysed reaction is (S)-4-amino-5-oxopentanoate = 5-aminolevulinate. The protein operates within porphyrin-containing compound metabolism; protoporphyrin-IX biosynthesis; 5-aminolevulinate from L-glutamyl-tRNA(Glu): step 2/2. The chain is Glutamate-1-semialdehyde 2,1-aminomutase from Geotalea daltonii (strain DSM 22248 / JCM 15807 / FRC-32) (Geobacter daltonii).